Reading from the N-terminus, the 139-residue chain is Actin-depolymerizing factor 7 (139 aa).

Positions 7-139 (GMAVDDECKL…GLDVIRGRAN (133 aa)) constitute an ADF-H domain.

The protein belongs to the actin-binding proteins ADF family.

Actin-depolymerizing protein. Severs actin filaments (F-actin) and binds to actin monomers. The chain is Actin-depolymerizing factor 7 (ADF7) from Oryza sativa subsp. japonica (Rice).